A 580-amino-acid chain; its full sequence is 2-succinyl-5-enolpyruvyl-6-hydroxy-3-cyclohexene-1-carboxylate synthase (580 aa).

Belongs to the TPP enzyme family. MenD subfamily. As to quaternary structure, homodimer. Requires Mg(2+) as cofactor. Mn(2+) is required as a cofactor. Thiamine diphosphate serves as cofactor.

It catalyses the reaction isochorismate + 2-oxoglutarate + H(+) = 5-enolpyruvoyl-6-hydroxy-2-succinyl-cyclohex-3-ene-1-carboxylate + CO2. The protein operates within quinol/quinone metabolism; 1,4-dihydroxy-2-naphthoate biosynthesis; 1,4-dihydroxy-2-naphthoate from chorismate: step 2/7. It participates in quinol/quinone metabolism; menaquinone biosynthesis. Catalyzes the thiamine diphosphate-dependent decarboxylation of 2-oxoglutarate and the subsequent addition of the resulting succinic semialdehyde-thiamine pyrophosphate anion to isochorismate to yield 2-succinyl-5-enolpyruvyl-6-hydroxy-3-cyclohexene-1-carboxylate (SEPHCHC). This Listeria welshimeri serovar 6b (strain ATCC 35897 / DSM 20650 / CCUG 15529 / CIP 8149 / NCTC 11857 / SLCC 5334 / V8) protein is 2-succinyl-5-enolpyruvyl-6-hydroxy-3-cyclohexene-1-carboxylate synthase.